The following is a 526-amino-acid chain: MTGGGFATSANGVEFEAKITPIVIISCIMAATGGLMFGYDVGVSGGVTSMPDFLEKFFPVVYRKVVAGADKDSNYCKYDNQGLQLFTSSLYLAGLTATFFASYTTRTLGRRLTMLIAGVFFIIGVALNAGAQDLAMLIAGRILLGCGVGFANQAVPLFLSEIAPTRIRGGLNILFQLNVTIGILFANLVNYGTAKIKGGWGWRLSLGLAGIPALLLTVGALLVTETPNSLVERGRLDEGKAVLRRIRGTDNVEPEFADLLEASRLAKEVKHPFRNLLQRRNRPQLVIAVALQIFQQCTGINAIMFYAPVLFSTLGFGSDASLYSAVVTGAVNVLSTLVSIYSVDKVGRRVLLLEAGVQMFFSQVVIAIILGVKVTDTSTNLSKGFAILVVVMICTYVAAFAWSWGPLGWLIPSETFPLETRSAGQSVTVCVNLLFTFIIAQAFLSMLCHFKFGIFIFFSAWVLIMSVFVMFLLPETKNIPIEEMTERVWKKHWFWARFMDDHNDHEFVNGEKSNGKSNGFDPSTRL.

The Cytoplasmic portion of the chain corresponds to 1–18 (MTGGGFATSANGVEFEAK). Residues 19 to 39 (ITPIVIISCIMAATGGLMFGY) traverse the membrane as a helical segment. The Extracellular portion of the chain corresponds to 40–81 (DVGVSGGVTSMPDFLEKFFPVVYRKVVAGADKDSNYCKYDNQ). The helical transmembrane segment at 82–102 (GLQLFTSSLYLAGLTATFFAS) threads the bilayer. Residues 103 to 111 (YTTRTLGRR) are Cytoplasmic-facing. A helical transmembrane segment spans residues 112-132 (LTMLIAGVFFIIGVALNAGAQ). At 133-141 (DLAMLIAGR) the chain is on the extracellular side. A helical membrane pass occupies residues 142–162 (ILLGCGVGFANQAVPLFLSEI). Residues 163-168 (APTRIR) lie on the Cytoplasmic side of the membrane. The chain crosses the membrane as a helical span at residues 169 to 189 (GGLNILFQLNVTIGILFANLV). Over 190–203 (NYGTAKIKGGWGWR) the chain is Extracellular. Residues 204–224 (LSLGLAGIPALLLTVGALLVT) traverse the membrane as a helical segment. At 225 to 296 (ETPNSLVERG…IAVALQIFQQ (72 aa)) the chain is on the cytoplasmic side. Residues 297–317 (CTGINAIMFYAPVLFSTLGFG) form a helical membrane-spanning segment. Topologically, residues 318–319 (SD) are extracellular. A helical membrane pass occupies residues 320-340 (ASLYSAVVTGAVNVLSTLVSI). The Cytoplasmic portion of the chain corresponds to 341-349 (YSVDKVGRR). Residues 350–370 (VLLLEAGVQMFFSQVVIAIIL) form a helical membrane-spanning segment. Topologically, residues 371–383 (GVKVTDTSTNLSK) are extracellular. Residues 384–404 (GFAILVVVMICTYVAAFAWSW) traverse the membrane as a helical segment. The Cytoplasmic segment spans residues 405 to 426 (GPLGWLIPSETFPLETRSAGQS). A helical transmembrane segment spans residues 427–447 (VTVCVNLLFTFIIAQAFLSML). Residues 448–451 (CHFK) are Extracellular-facing. The helical transmembrane segment at 452–472 (FGIFIFFSAWVLIMSVFVMFL) threads the bilayer. Residues 473–526 (LPETKNIPIEEMTERVWKKHWFWARFMDDHNDHEFVNGEKSNGKSNGFDPSTRL) are Cytoplasmic-facing.

This sequence belongs to the major facilitator superfamily. Sugar transporter (TC 2.A.1.1) family.

Its subcellular location is the cell membrane. Functionally, mediates an active uptake of hexoses, probably by sugar/hydrogen symport. This is Sugar transport protein 13 (STP13) from Arabidopsis thaliana (Mouse-ear cress).